Consider the following 376-residue polypeptide: Glutamate 5-kinase (376 aa).

An ATP-binding site is contributed by lysine 17. Serine 57, aspartate 144, and asparagine 156 together coordinate substrate. 176–177 (TD) contributes to the ATP binding site. Residues 283 to 361 (KGQLVLDEGA…SEINQLLGYS (79 aa)) enclose the PUA domain.

The protein belongs to the glutamate 5-kinase family.

It localises to the cytoplasm. It catalyses the reaction L-glutamate + ATP = L-glutamyl 5-phosphate + ADP. Its pathway is amino-acid biosynthesis; L-proline biosynthesis; L-glutamate 5-semialdehyde from L-glutamate: step 1/2. Its function is as follows. Catalyzes the transfer of a phosphate group to glutamate to form L-glutamate 5-phosphate. The protein is Glutamate 5-kinase of Hydrogenovibrio crunogenus (strain DSM 25203 / XCL-2) (Thiomicrospira crunogena).